We begin with the raw amino-acid sequence, 369 residues long: Queuine tRNA-ribosyltransferase (369 aa).

Asp89 functions as the Proton acceptor in the catalytic mechanism. Substrate-binding positions include 89-93, Asp143, Gln187, and Gly214; that span reads DSGGF. Residues 245 to 251 form an RNA binding region; sequence GVGTPED. The active-site Nucleophile is the Asp264. Residues 269–273 form an RNA binding; important for wobble base 34 recognition region; that stretch reads TRNAR. Residues Cys302, Cys304, Cys307, and His333 each coordinate Zn(2+).

Belongs to the queuine tRNA-ribosyltransferase family. As to quaternary structure, homodimer. Within each dimer, one monomer is responsible for RNA recognition and catalysis, while the other monomer binds to the replacement base PreQ1. The cofactor is Zn(2+).

The enzyme catalyses 7-aminomethyl-7-carbaguanine + guanosine(34) in tRNA = 7-aminomethyl-7-carbaguanosine(34) in tRNA + guanine. The protein operates within tRNA modification; tRNA-queuosine biosynthesis. Functionally, catalyzes the base-exchange of a guanine (G) residue with the queuine precursor 7-aminomethyl-7-deazaguanine (PreQ1) at position 34 (anticodon wobble position) in tRNAs with GU(N) anticodons (tRNA-Asp, -Asn, -His and -Tyr). Catalysis occurs through a double-displacement mechanism. The nucleophile active site attacks the C1' of nucleotide 34 to detach the guanine base from the RNA, forming a covalent enzyme-RNA intermediate. The proton acceptor active site deprotonates the incoming PreQ1, allowing a nucleophilic attack on the C1' of the ribose to form the product. After dissociation, two additional enzymatic reactions on the tRNA convert PreQ1 to queuine (Q), resulting in the hypermodified nucleoside queuosine (7-(((4,5-cis-dihydroxy-2-cyclopenten-1-yl)amino)methyl)-7-deazaguanosine). In Dechloromonas aromatica (strain RCB), this protein is Queuine tRNA-ribosyltransferase.